The chain runs to 293 residues: Pyridoxal 5'-phosphate synthase subunit PdxS (293 aa).

D-ribose 5-phosphate is bound at residue Asp23. Lys80 acts as the Schiff-base intermediate with D-ribose 5-phosphate in catalysis. Gly152 serves as a coordination point for D-ribose 5-phosphate. Arg164 serves as a coordination point for D-glyceraldehyde 3-phosphate. D-ribose 5-phosphate contacts are provided by residues Gly213 and 234–235; that span reads GS.

Belongs to the PdxS/SNZ family. In the presence of PdxT, forms a dodecamer of heterodimers.

The catalysed reaction is aldehydo-D-ribose 5-phosphate + D-glyceraldehyde 3-phosphate + L-glutamine = pyridoxal 5'-phosphate + L-glutamate + phosphate + 3 H2O + H(+). Its pathway is cofactor biosynthesis; pyridoxal 5'-phosphate biosynthesis. In terms of biological role, catalyzes the formation of pyridoxal 5'-phosphate from ribose 5-phosphate (RBP), glyceraldehyde 3-phosphate (G3P) and ammonia. The ammonia is provided by the PdxT subunit. Can also use ribulose 5-phosphate and dihydroxyacetone phosphate as substrates, resulting from enzyme-catalyzed isomerization of RBP and G3P, respectively. In Methanothermobacter thermautotrophicus (strain ATCC 29096 / DSM 1053 / JCM 10044 / NBRC 100330 / Delta H) (Methanobacterium thermoautotrophicum), this protein is Pyridoxal 5'-phosphate synthase subunit PdxS.